The primary structure comprises 622 residues: Mitochondrial distribution and morphology protein 34 (622 aa).

The SMP-LTD domain maps to 1–195 (MAFNFNWSPL…LPAIIHRLSL (195 aa)). Disordered stretches follow at residues 211–234 (QVTN…DPVD), 303–322 (PSGL…SHVA), 355–432 (SMGA…IRQP), 445–464 (ERNA…PASR), 482–546 (SLQQ…QTHL), and 581–622 (KMGG…AYRH). The span at 214 to 225 (NPPLEGPGLDPL) shows a compositional bias: low complexity. Residues 360–372 (RHSKAHARKRKKR) are compositionally biased toward basic residues. The span at 373 to 384 (VVDLRRRPKNTD) shows a compositional bias: basic and acidic residues. Positions 388-404 (SVSGESEFTESTSAASV) are enriched in low complexity. 2 stretches are compositionally biased toward polar residues: residues 482-495 (SLQQ…SKSL) and 522-532 (NASNYTSSGDS). 2 stretches are compositionally biased toward low complexity: residues 533 to 543 (QQQQQQQQQHQ) and 592 to 601 (NNKNDNKNNN).

This sequence belongs to the MDM34 family. In terms of assembly, component of the ER-mitochondria encounter structure (ERMES) or MDM complex, composed of MMM1, MDM10, MDM12 and MDM34.

It is found in the mitochondrion outer membrane. In terms of biological role, component of the ERMES/MDM complex, which serves as a molecular tether to connect the endoplasmic reticulum (ER) and mitochondria. Components of this complex are involved in the control of mitochondrial shape and protein biogenesis, and function in nonvesicular lipid trafficking between the ER and mitochondria. MDM34 is required for the interaction of the ER-resident membrane protein MMM1 and the outer mitochondrial membrane-resident beta-barrel protein MDM10. This is Mitochondrial distribution and morphology protein 34 from Ajellomyces capsulatus (strain G186AR / H82 / ATCC MYA-2454 / RMSCC 2432) (Darling's disease fungus).